The chain runs to 91 residues: DNA-directed RNA polymerase subunit omega (91 aa).

This sequence belongs to the RNA polymerase subunit omega family. In terms of assembly, the RNAP catalytic core consists of 2 alpha, 1 beta, 1 beta' and 1 omega subunit. When a sigma factor is associated with the core the holoenzyme is formed, which can initiate transcription.

It carries out the reaction RNA(n) + a ribonucleoside 5'-triphosphate = RNA(n+1) + diphosphate. Functionally, promotes RNA polymerase assembly. Latches the N- and C-terminal regions of the beta' subunit thereby facilitating its interaction with the beta and alpha subunits. The protein is DNA-directed RNA polymerase subunit omega of Photorhabdus laumondii subsp. laumondii (strain DSM 15139 / CIP 105565 / TT01) (Photorhabdus luminescens subsp. laumondii).